A 183-amino-acid chain; its full sequence is Guanylate kinase (183 aa).

The Guanylate kinase-like domain occupies 4 to 182 (GRVVVLTGPS…AITALEAAIF (179 aa)). Position 11–18 (11–18 (GPSGVGKG)) interacts with ATP.

This sequence belongs to the guanylate kinase family.

The protein localises to the cytoplasm. It catalyses the reaction GMP + ATP = GDP + ADP. It carries out the reaction dZMP + ATP = dZDP + ADP. It functions in the pathway purine metabolism. In terms of biological role, essential for recycling GMP and indirectly, cGMP. Its function is as follows. (Microbial infection) Catalyzes the phosphorylation of dZMP to dZDP, when the bacterium is infected by a phage that produces the substrate for the synthesis of dZTP (2- amino-2'-deoxyadenosine 5'-triphosphate), which is then used by the phage as a DNA polymerase substrate. In Synechococcus sp. (strain ATCC 27144 / PCC 6301 / SAUG 1402/1) (Anacystis nidulans), this protein is Guanylate kinase.